The primary structure comprises 628 residues: Inactive sodium-dependent neutral amino acid transporter B(0)AT3 (628 aa).

At 1-26 (MAHAPEPDPAACDLGDERPKWDNKAQ) the chain is on the cytoplasmic side. The chain crosses the membrane as a helical span at residues 27–47 (YLLSCTGFAVGLGNIWRFPYL). The Extracellular segment spans residues 48–51 (CQTY). A helical transmembrane segment spans residues 52–74 (GGGAFLIPYVIALVFEGIPIFHV). Residues 75–88 (ELAIGQRLRKGSVG) are Cytoplasmic-facing. A helical membrane pass occupies residues 89 to 111 (VWTAISPYLSGVGLGCVTLSFLI). Residues 112–178 (SLYYNTIVAW…ITADINDSGS (67 aa)) are Extracellular-facing. N-linked (GlcNAc...) asparagine glycosylation is found at Asn-144, Asn-168, and Asn-174. The helical transmembrane segment at 179 to 201 (IQWWLLICLAASWAVVYMCVIRG) threads the bilayer. The Cytoplasmic portion of the chain corresponds to 202-207 (IETTGK). The helical transmembrane segment at 208–230 (VIYFTALFPYLVLTIFLIRGLTL) threads the bilayer. Over 231 to 253 (PGATKGLIYLFTPNMHILQNPRV) the chain is Extracellular. A helical transmembrane segment spans residues 254 to 276 (WLDAATQIFFSLSLAFGGHIAFA). At 277 to 288 (SYNSPRNDCQKD) the chain is on the cytoplasmic side. The chain crosses the membrane as a helical span at residues 289 to 311 (AVVIALVNRMTSLYASIAVFSVL). At 312-399 (GFKATNDYEH…TETDLHMPGA (88 aa)) the chain is on the extracellular side. Asn-354 carries an N-linked (GlcNAc...) asparagine glycan. The chain crosses the membrane as a helical span at residues 400-422 (PVWAMLFFGMLFTLGLSTMFGTV). At 423–442 (EAVITPLLDVGVLPRWVPKE) the chain is on the cytoplasmic side. The helical transmembrane segment at 443 to 465 (ALTGLVCLVCFLSATCFTLQSGN) threads the bilayer. The Extracellular portion of the chain corresponds to 466-474 (YWLEIFDNF). Residues 475–497 (AASPNLLMLAFLEVVGVVYVYGM) traverse the membrane as a helical segment. Residues 498-517 (KRFCDDIAWMTGRRPSPYWR) lie on the Cytoplasmic side of the membrane. Residues 518 to 540 (LTWRVVSPLLLTIFVAYIILLFW) form a helical membrane-spanning segment. At 541–568 (KPLRYKAWNPKYELFPSRQEKLYPGWAR) the chain is on the extracellular side. The helical transmembrane segment at 569–591 (AACVLLSLLPVLWVPVAALAQLL) threads the bilayer. Residues 592–628 (TRRRRTWRDRDARPDTDMRPDTDTRPDTDMRPDTDMR) lie on the Cytoplasmic side of the membrane. The interval 602–628 (DARPDTDMRPDTDTRPDTDMRPDTDMR) is disordered.

Belongs to the sodium:neurotransmitter symporter (SNF) (TC 2.A.22) family. SLC6A18 subfamily. In terms of tissue distribution, abundantly expressed in kidney, but not in intestine.

The protein resides in the membrane. Its function is as follows. Does not show neutral amino acid transporter activity. The chain is Inactive sodium-dependent neutral amino acid transporter B(0)AT3 from Homo sapiens (Human).